The sequence spans 1021 residues: Solute carrier family 12 member 3 (1021 aa).

Over 1 to 137 the chain is Cytoplasmic; that stretch reads MAELPTTETP…KNPEEPVRFG (137 aa). Phosphoserine is present on Ser-43. Thr-46 carries the post-translational modification Phosphothreonine; by OXSR1 and STK39. Position 49 is a phosphoserine (Ser-49). Thr-50 carries the post-translational modification Phosphothreonine. Thr-55 and Thr-60 each carry phosphothreonine; by OXSR1 and STK39. Ser-73 is subject to Phosphoserine. Phosphoserine; by OXSR1 and STK39 is present on Ser-91. Thr-124 carries the phosphothreonine modification. Ser-126 carries the post-translational modification Phosphoserine. A discontinuously helical membrane pass occupies residues 138–167; that stretch reads WVKGVMIRCMLNIWGVILYLRLPWITAQAG. Leu-148 is a binding site for Na(+). Polythiazide is bound at residue Asn-149. Trp-151 lines the Na(+) pocket. A helical membrane pass occupies residues 168–189; it reads IVLTWIIILLSVTVTSITGLSI. The Cytoplasmic portion of the chain corresponds to 190 to 220; that stretch reads SAISTNGKVKSGGTYFLISRSLGPELGGSIG. A helical membrane pass occupies residues 221 to 243; that stretch reads LIFAFANAVGVAMHTVGFAETVR. Positions 227 and 234 each coordinate polythiazide. Topologically, residues 244–255 are extracellular; sequence DLLQEYGAPIVD. Transmembrane regions (helical) follow at residues 256-280 and 281-303; these read PIND…AGME and WESK…YLVG. At 304–338 the chain is on the extracellular side; it reads TLIPPSEDKASKGFFSYRADIFVQNLVPDWRGPDG. Residues 339-360 form a discontinuously helical membrane-spanning segment; it reads TFFGMFSIFFPSATGILAGANI. Thr-352 lines the polythiazide pocket. Positions 353, 354, and 355 each coordinate chloride. Asn-359 contacts polythiazide. Residues 361 to 371 lie on the Cytoplasmic side of the membrane; it reads SGDLKDPAIAI. A helical membrane pass occupies residues 372–393; that stretch reads PKGTLMAIFWTTISYLAISATI. Topologically, residues 394–453 are extracellular; sequence GSCVVRDASGVLNDTVTPGWGACEGLACSYGWNFTECTQQHSCHYGLINYYQTMSMVSGF. An N-linked (GlcNAc...) asparagine glycan is attached at Asn-406. A disulfide bridge links Cys-416 with Cys-421. Asn-426 carries an N-linked (GlcNAc...) asparagine glycan. An intrachain disulfide couples Cys-430 to Cys-436. A helical transmembrane segment spans residues 454 to 477; sequence APLITAGIFGATLSSALACLVSAA. The Na(+) site is built by Ala-464, Ser-467, and Ser-468. The Cytoplasmic portion of the chain corresponds to 478 to 507; that stretch reads KVFQCLCEDQLYPLIGFFGKGYGKNKEPVR. Residues 508 to 522 form a helical membrane-spanning segment; that stretch reads GYLLAYAIAVAFIII. At 523–527 the chain is on the extracellular side; it reads AELNT. The helical transmembrane segment at 528–544 threads the bilayer; the sequence is IAPIISNFFLCSYALIN. Residue Tyr-540 participates in chloride binding. Residues 545–567 lie on the Cytoplasmic side of the membrane; sequence FSCFHASITNSPGWRPSFQYYNK. 2 consecutive transmembrane segments (helical) span residues 568–587 and 588–599; these read WAAL…LTWW and AALIAIGVVLFL. At 600–1021 the chain is on the cytoplasmic side; it reads LLYVIYKKPE…QENVLTFYCQ (422 aa). The segment at 615-630 is scissor helix; that stretch reads SVQAGSYNLALSYSVG. ATP-binding residues include Leu-648, Arg-655, Val-677, Gly-741, Leu-780, and Asn-781.

It belongs to the SLC12A transporter family. As to quaternary structure, homodimer; adopts a domain-swap conformation at the scissor helices connecting the transmembrane domain and C-terminal domain. Interacts with KLHL3. Interacts with IL18R1; this interaction is increased by IL18 treatment. Post-translationally, ubiquitinated; ubiquitination is essential for regulation of endocytosis. The BCR(KLHL3) complex was initially identified as a candidate ubiquitin ligase for SLC12A3. However, it was later shown that it is not the case. Phosphorylated at Thr-46, Thr-55, Thr-60 and Ser-91 by OXSR1/OSR1 and STK39/SPAK downstream of WNK4, promoting its activity. Phosphorylated in response to IL18. In terms of tissue distribution, predominantly expressed in the kidney (at protein level). Localizes to the distal convoluted tubules (at protein level). Not detected in normal aorta, but abundantly expressed in fatty streaks and advanced atherosclerotic lesions (at protein level).

It is found in the cell membrane. The protein resides in the apical cell membrane. It carries out the reaction chloride(out) + Na(+)(out) = chloride(in) + Na(+)(in). With respect to regulation, phosphorylation by OXSR1/OSR1 and STK39/SPAK in kidney distal convoluted tubules downstream of WNK4 promotes its activity. Also activated by OXSR1/OSR1 and STK39/SPAK downstream of WNK3. Target of thiazide diuretics used in the treatment of high blood pressure. Thiazide drugs, such as polythiazide, specifically inhibit SLC12A3/NCC transporter activity by competing with chloride for binding and by locking SLC12A3/NCC in an outward-facing conformation. Functionally, electroneutral sodium and chloride ion cotransporter, which acts as a key mediator of sodium and chloride reabsorption in kidney distal convoluted tubules. Also acts as a receptor for the pro-inflammatory cytokine IL18, thereby contributing to IL18-induced cytokine production, including IFNG, IL6, IL18 and CCL2. May act either independently of IL18R1, or in a complex with IL18R1. The protein is Solute carrier family 12 member 3 of Homo sapiens (Human).